Consider the following 137-residue polypeptide: Sec-independent protein translocase protein TatB (137 aa).

A helical transmembrane segment spans residues 2 to 22 (FANIGWGEMLILVIAGLVILG). The tract at residues 92 to 137 (FFTGKFDQQNGKPAAGQEKPVTPVNPPVTATPPSESTATPFDSDAT) is disordered. Residues 122–131 (TPPSESTATP) are compositionally biased toward low complexity.

This sequence belongs to the TatB family. As to quaternary structure, the Tat system comprises two distinct complexes: a TatABC complex, containing multiple copies of TatA, TatB and TatC subunits, and a separate TatA complex, containing only TatA subunits. Substrates initially bind to the TatABC complex, which probably triggers association of the separate TatA complex to form the active translocon.

It is found in the cell membrane. Its function is as follows. Part of the twin-arginine translocation (Tat) system that transports large folded proteins containing a characteristic twin-arginine motif in their signal peptide across membranes. Together with TatC, TatB is part of a receptor directly interacting with Tat signal peptides. TatB may form an oligomeric binding site that transiently accommodates folded Tat precursor proteins before their translocation. This is Sec-independent protein translocase protein TatB from Mycobacterium sp. (strain JLS).